The following is a 32-amino-acid chain: Cyclotide Hyfl-C (32 aa).

A cross-link (cyclopeptide (Gly-Asn)) is located at residues 1-32 (GSPRQCAETCFIGKCYTEELGCTCTAFLCMKN). Intrachain disulfides connect cysteine 6-cysteine 22, cysteine 10-cysteine 24, and cysteine 15-cysteine 29.

This sequence belongs to the cyclotide family. Moebius subfamily. This is a cyclic peptide.

Its function is as follows. Probably participates in a plant defense mechanism. The polypeptide is Cyclotide Hyfl-C (Hybanthus floribundus (Greenviolet)).